We begin with the raw amino-acid sequence, 160 residues long: 6,7-dimethyl-8-ribityllumazine synthase (160 aa).

5-amino-6-(D-ribitylamino)uracil contacts are provided by residues Trp26, 59–61 (AVE), and 81–83 (VVI). 86–87 (GT) serves as a coordination point for (2S)-2-hydroxy-3-oxobutyl phosphate. Catalysis depends on His89, which acts as the Proton donor. Phe114 is a 5-amino-6-(D-ribitylamino)uracil binding site. Arg128 provides a ligand contact to (2S)-2-hydroxy-3-oxobutyl phosphate.

Belongs to the DMRL synthase family.

It catalyses the reaction (2S)-2-hydroxy-3-oxobutyl phosphate + 5-amino-6-(D-ribitylamino)uracil = 6,7-dimethyl-8-(1-D-ribityl)lumazine + phosphate + 2 H2O + H(+). The protein operates within cofactor biosynthesis; riboflavin biosynthesis; riboflavin from 2-hydroxy-3-oxobutyl phosphate and 5-amino-6-(D-ribitylamino)uracil: step 1/2. Its function is as follows. Catalyzes the formation of 6,7-dimethyl-8-ribityllumazine by condensation of 5-amino-6-(D-ribitylamino)uracil with 3,4-dihydroxy-2-butanone 4-phosphate. This is the penultimate step in the biosynthesis of riboflavin. In Frankia casuarinae (strain DSM 45818 / CECT 9043 / HFP020203 / CcI3), this protein is 6,7-dimethyl-8-ribityllumazine synthase.